An 88-amino-acid chain; its full sequence is Small ribosomal subunit protein bS16 (88 aa).

It belongs to the bacterial ribosomal protein bS16 family.

This chain is Small ribosomal subunit protein bS16, found in Anaeromyxobacter sp. (strain K).